The primary structure comprises 946 residues: Protein translocase subunit SecA (946 aa).

ATP is bound by residues glutamine 89, 107–111 (GEGKT), and aspartate 508. The tract at residues 534–569 (PEDSHKPPVPLQRRKDSSVGFGKEENNSKDKKVNHS) is disordered. The span at 546–569 (RRKDSSVGFGKEENNSKDKKVNHS) shows a compositional bias: basic and acidic residues.

The protein belongs to the SecA family. As to quaternary structure, monomer and homodimer. Part of the essential Sec protein translocation apparatus which comprises SecA, SecYEG and auxiliary proteins SecDF. Other proteins may also be involved.

It is found in the cell inner membrane. Its subcellular location is the cellular thylakoid membrane. It localises to the cytoplasm. The catalysed reaction is ATP + H2O + cellular proteinSide 1 = ADP + phosphate + cellular proteinSide 2.. Functionally, part of the Sec protein translocase complex. Interacts with the SecYEG preprotein conducting channel. Has a central role in coupling the hydrolysis of ATP to the transfer of proteins into and across the cell membrane, serving as an ATP-driven molecular motor driving the stepwise translocation of polypeptide chains across the membrane. In terms of biological role, probably participates in protein translocation into and across both the cytoplasmic and thylakoid membranes in cyanobacterial cells. This Prochlorococcus marinus (strain SARG / CCMP1375 / SS120) protein is Protein translocase subunit SecA.